The sequence spans 433 residues: Enolase (433 aa).

Q167 lines the (2R)-2-phosphoglycerate pocket. E209 serves as the catalytic Proton donor. D246, E291, and D318 together coordinate Mg(2+). 4 residues coordinate (2R)-2-phosphoglycerate: K343, R372, S373, and K394. Catalysis depends on K343, which acts as the Proton acceptor.

This sequence belongs to the enolase family. In terms of assembly, component of the RNA degradosome, a multiprotein complex involved in RNA processing and mRNA degradation. Requires Mg(2+) as cofactor.

It is found in the cytoplasm. It localises to the secreted. The protein localises to the cell surface. It catalyses the reaction (2R)-2-phosphoglycerate = phosphoenolpyruvate + H2O. It participates in carbohydrate degradation; glycolysis; pyruvate from D-glyceraldehyde 3-phosphate: step 4/5. Functionally, catalyzes the reversible conversion of 2-phosphoglycerate (2-PG) into phosphoenolpyruvate (PEP). It is essential for the degradation of carbohydrates via glycolysis. The sequence is that of Enolase from Photobacterium profundum (strain SS9).